The primary structure comprises 980 residues: Zinc finger BED domain-containing protein 6 (980 aa).

Positions 1–89 (MSVCTLSVPV…ILAKKFSKDL (89 aa)) are required for nucleolar localization. Residues 89-109 (LGSGRPVADAPASLASGAPEQ) form a disordered region. The BED-type 1 zinc-finger motif lies at 130–187 (AKTSIVWHFFHVDPQYTWRAICNLCEKSVSRGKPGSHLGTSTLQRHLQARHSPHWTRA). The Zn(2+) site is built by C151, C154, H175, and H180. The interval 201 to 239 (LDLSLSPPSPGSNGSFEYIPTDSVDENRMGKKRDKSASD) is disordered. The span at 203-215 (LSLSPPSPGSNGS) shows a compositional bias: low complexity. The BED-type 2 zinc finger occupies 265–322 (AKTSAVWNFFYTDPQHISRAVCNICKRSVSRGRPGSHLGTSTLQRHLQATHPIHWAVA). Zn(2+) contacts are provided by C286, C289, H310, and H315. Positions 328-397 (AIGNGLDETE…ADQDNPVHAQ (70 aa)) are disordered. Positions 360 to 373 (TAEDLSDSDTDEPP) are enriched in acidic residues. Residue S383 is modified to Phosphoserine. The tract at residues 868 to 950 (VVDEYFKEKY…EQLIFLKMNL (83 aa)) is HATC (Hobo-Ac-Tam3) domain.

As to expression, expressed in pancreatic islet cells and weakly expressed in surrounding exocrine tissues (at protein level). Expressed in muscle and brain (at protein level). Shows broad tissue distribution with expression detected in brain, stomach, intestine, heart, kidney, liver, lung, skeletal muscle, ovary, spleen, tail and testis.

It localises to the nucleus. The protein localises to the nucleolus. The protein resides in the cytoplasm. Transcriptional repressor which binds to the consensus sequence 5'-GCTCGC-3', transcription regulation may be tissue-specific. Regulates the expression of target genes such as: IGF2, PGAP6/TMEM8, ENHO, and PIANP. Acts as a transcriptional repressor of growth factor IGF2, thereby negatively regulating postnatal growth of muscles and internal organs, especially in females. Negatively regulates myoblast differentiation and myoblast mitochondrial activity via its regulation of IGF2 transcription. Negatively regulates the cell cycle of myoblasts, potentially via transcriptional regulation of the E2F family of transcription factors such as: E2F1 and E2F2. Positively regulates the cell cycle and survival of pancreatic beta cells. Binds to the CDH2 gene and may directly repress CDH2 transcription. Probably by controlling CDH2 expression, regulates pancreatic beta cell adhesion, and formation of cell-to-cell junctions between pancreatic beta cells and neural crest stem cells. May also play a role in embryonic beta cell differentiation. May play a role in insulin sensitivity and glucose clearance. The protein is Zinc finger BED domain-containing protein 6 of Mus musculus (Mouse).